A 122-amino-acid polypeptide reads, in one-letter code: Large ribosomal subunit protein uL14 (122 aa).

This sequence belongs to the universal ribosomal protein uL14 family. As to quaternary structure, part of the 50S ribosomal subunit. Forms a cluster with proteins L3 and L19. In the 70S ribosome, L14 and L19 interact and together make contacts with the 16S rRNA in bridges B5 and B8.

Binds to 23S rRNA. Forms part of two intersubunit bridges in the 70S ribosome. This Leuconostoc citreum (strain KM20) protein is Large ribosomal subunit protein uL14.